The primary structure comprises 354 residues: Uroporphyrinogen decarboxylase (354 aa).

Residues 27 to 31, Phe46, Asp77, Tyr154, Thr209, and His327 contribute to the substrate site; that span reads RQAGR.

Belongs to the uroporphyrinogen decarboxylase family. As to quaternary structure, homodimer.

The protein localises to the cytoplasm. The enzyme catalyses uroporphyrinogen III + 4 H(+) = coproporphyrinogen III + 4 CO2. It functions in the pathway porphyrin-containing compound metabolism; protoporphyrin-IX biosynthesis; coproporphyrinogen-III from 5-aminolevulinate: step 4/4. Catalyzes the decarboxylation of four acetate groups of uroporphyrinogen-III to yield coproporphyrinogen-III. This is Uroporphyrinogen decarboxylase from Salmonella typhi.